A 786-amino-acid polypeptide reads, in one-letter code: Pentatricopeptide repeat-containing protein At2g22070 (786 aa).

PPR repeat units follow at residues serine 48–arginine 78, threonine 79–arginine 109, aspartate 110–proline 144, threonine 145–glycine 179, asparagine 180–serine 214, tryptophan 215–arginine 241, aspartate 242–serine 276, aspartate 278–isoleucine 312, serine 313–isoleucine 347, phenylalanine 350–arginine 376, aspartate 377–proline 411, asparagine 412–tyrosine 446, serine 447–glutamate 477, aspartate 479–proline 513, aspartate 514–isoleucine 548, and threonine 550–glutamate 580. The tract at residues threonine 585–lysine 660 is type E motif. The type E(+) motif stretch occupies residues histidine 661–lysine 691. The segment at lysine 692–tryptophan 786 is type DYW motif.

This sequence belongs to the PPR family. PCMP-H subfamily.

The protein is Pentatricopeptide repeat-containing protein At2g22070 (PCMP-H41) of Arabidopsis thaliana (Mouse-ear cress).